The primary structure comprises 388 residues: Chorismate synthase (388 aa).

2 residues coordinate NADP(+): Arg-39 and Arg-45. FMN contacts are provided by residues Arg-130–Ser-132, Asn-251–Ala-252, Gly-296, Lys-311–Thr-315, and Arg-337.

This sequence belongs to the chorismate synthase family. As to quaternary structure, homotetramer. FMNH2 is required as a cofactor.

It carries out the reaction 5-O-(1-carboxyvinyl)-3-phosphoshikimate = chorismate + phosphate. It participates in metabolic intermediate biosynthesis; chorismate biosynthesis; chorismate from D-erythrose 4-phosphate and phosphoenolpyruvate: step 7/7. In terms of biological role, catalyzes the anti-1,4-elimination of the C-3 phosphate and the C-6 proR hydrogen from 5-enolpyruvylshikimate-3-phosphate (EPSP) to yield chorismate, which is the branch point compound that serves as the starting substrate for the three terminal pathways of aromatic amino acid biosynthesis. This reaction introduces a second double bond into the aromatic ring system. The protein is Chorismate synthase of Lactococcus lactis subsp. lactis (strain IL1403) (Streptococcus lactis).